We begin with the raw amino-acid sequence, 725 residues long: Putative coiled-coil domain-containing protein 144B (725 aa).

Over residues 1 to 11 (MASWGGEKRGG) the composition is skewed to basic and acidic residues. Disordered regions lie at residues 1 to 25 (MASWGGEKRGGAEGSPKLAVYATRK), 87 to 188 (AARS…NLTE), 213 to 260 (LPEN…DCDR), 453 to 485 (NMNQNSDSGSTNNYKSLKPKLENLSSLPPDSDR), and 528 to 586 (EEEM…KVKN). Composition is skewed to polar residues over residues 129 to 150 (PESLPQNNNPDWHPTNLTLSDE) and 165 to 178 (PSVSPSMPENQSAT). Residues 215–244 (ENKESKEAEQDLELTSEEEQERLKGCENKQ) adopt a coiled-coil conformation. A compositionally biased stretch (acidic residues) spans 224 to 234 (QDLELTSEEEQ). Residues 453 to 467 (NMNQNSDSGSTNNYK) are compositionally biased toward polar residues. The stretch at 490–546 (YLHEELQQDMQKFKNEVNTLEEEFLALKKENVQLHKEVEEEMEKHRSNSTELSGTLT) forms a coiled coil. The span at 528 to 537 (EEEMEKHRSN) shows a compositional bias: basic and acidic residues. Low complexity predominate over residues 543–552 (GTLTDGTTVG). Positions 563-583 (PRKENEEHDRPADKTANEKNK) are enriched in basic and acidic residues. A coiled-coil region spans residues 648–713 (LLKLKNNHCD…ALKQENGRKE (66 aa)).

This sequence belongs to the CCDC144 family.

This is Putative coiled-coil domain-containing protein 144B from Homo sapiens (Human).